Reading from the N-terminus, the 748-residue chain is Glucans biosynthesis glucosyltransferase H (748 aa).

7 helical membrane passes run 85 to 107 (LIVR…GYGM), 127 to 149 (FLVL…FVLL), 443 to 465 (GIGS…LISL), 494 to 516 (AWVF…LVLI), 529 to 551 (GRVL…CMMI), 587 to 606 (LAGP…SVSL), and 608 to 630 (LLLW…IMTS).

This sequence belongs to the glycosyltransferase 2 family. OpgH subfamily.

Its subcellular location is the cell inner membrane. The protein operates within glycan metabolism; osmoregulated periplasmic glucan (OPG) biosynthesis. In terms of biological role, involved in the biosynthesis of osmoregulated periplasmic glucans (OPGs). This is Glucans biosynthesis glucosyltransferase H from Bradyrhizobium diazoefficiens (strain JCM 10833 / BCRC 13528 / IAM 13628 / NBRC 14792 / USDA 110).